The chain runs to 293 residues: Putative ribose uptake protein RbsU (293 aa).

Transmembrane regions (helical) follow at residues 5–24 (AILI…TIAS), 34–51 (IFGA…LALF), 58–80 (GGMA…IITF), 95–114 (TTAF…LGNW), 121–138 (IIGF…RMTV), 153–170 (SAVI…IYSA), 177–199 (IGGF…IYAL), 212–234 (VSWQ…LISA), 241–263 (LATG…IFFL), and 273–292 (MITI…TVFI).

This sequence belongs to the GRP transporter (TC 2.A.7.5) family.

Its subcellular location is the cell membrane. Functionally, could be involved in the uptake of ribose. In Staphylococcus epidermidis (strain ATCC 35984 / DSM 28319 / BCRC 17069 / CCUG 31568 / BM 3577 / RP62A), this protein is Putative ribose uptake protein RbsU (rbsU).